The sequence spans 1334 residues: SCAR-like protein 2 (1334 aa).

A compositionally biased stretch (basic and acidic residues) spans 197–207 (KTGNFQREKKS). 10 disordered regions span residues 197-281 (KTGN…SSFS), 294-331 (DTKP…GTSA), 481-516 (PDSS…ADAP), 568-602 (PNQS…SSYT), 643-668 (DKPT…TVES), 791-832 (STSH…KNII), 931-956 (FEKK…YSEK), 1000-1026 (FQLL…GRSY), 1248-1268 (SGQQ…DTKN), and 1280-1304 (RSKT…TANS). Residues 241 to 256 (VQLTSRHFATPSTDGR) are compositionally biased toward polar residues. Residues 310-319 (SNNNLHKLSN) show a composition bias toward low complexity. Residues 320–330 (TPLHTRLNGTS) show a composition bias toward polar residues. The span at 574-595 (DSKEIPDSKAEDAPIDSPEKLE) shows a compositional bias: basic and acidic residues. Residues 791–823 (STSHSSETNQSTVRTPDTVIGQTEGSTGCSTSF) show a composition bias toward polar residues. Residues 945–956 (SSLFSSSHYSEK) show a composition bias toward low complexity. Over residues 1248 to 1260 (SGQQKLNGHEKSK) the composition is skewed to basic and acidic residues. Residues 1271-1289 (EREELLQQIRSKTFNLRRT) enclose the WH2 domain. Residues 1289 to 1304 (TNASKTNTSSPTTANS) show a composition bias toward low complexity.

This sequence belongs to the SCAR/WAVE family.

It is found in the cytoplasm. It localises to the cytoskeleton. Functionally, involved in regulation of actin and microtubule organization. Part of a WAVE complex that activates the Arp2/3 complex. The protein is SCAR-like protein 2 of Oryza sativa subsp. japonica (Rice).